The sequence spans 172 residues: Glutamyl-tRNA(Gln) amidotransferase subunit C-3, mitochondrial (172 aa).

Residues 49-71 (KHPSKVPQRPNKSTIDGQSTPTR) form a disordered region. The span at 58 to 71 (PNKSTIDGQSTPTR) shows a compositional bias: polar residues.

The protein belongs to the GatC family. Subunit of the heterotrimeric GatCAB amidotransferase (AdT) complex, composed of A, B and C subunits.

The protein resides in the mitochondrion. The enzyme catalyses L-glutamyl-tRNA(Gln) + L-glutamine + ATP + H2O = L-glutaminyl-tRNA(Gln) + L-glutamate + ADP + phosphate + H(+). In terms of biological role, allows the formation of correctly charged Gln-tRNA(Gln) through the transamidation of misacylated Glu-tRNA(Gln) in the mitochondria. The reaction takes place in the presence of glutamine and ATP through an activated gamma-phospho-Glu-tRNA(Gln). This chain is Glutamyl-tRNA(Gln) amidotransferase subunit C-3, mitochondrial, found in Culex quinquefasciatus (Southern house mosquito).